The chain runs to 180 residues: Hypoxanthine-guanine phosphoribosyltransferase (180 aa).

Diphosphate-binding residues include Lys-43 and Gly-44. Mg(2+) is bound by residues Glu-99 and Asp-100. Asp-103 serves as the catalytic Proton acceptor. GMP is bound by residues Lys-131, 152–153 (FI), and Asp-159. Arg-165 is a diphosphate binding site.

This sequence belongs to the purine/pyrimidine phosphoribosyltransferase family. Mg(2+) serves as cofactor.

It is found in the cytoplasm. It carries out the reaction IMP + diphosphate = hypoxanthine + 5-phospho-alpha-D-ribose 1-diphosphate. The enzyme catalyses GMP + diphosphate = guanine + 5-phospho-alpha-D-ribose 1-diphosphate. It functions in the pathway purine metabolism; IMP biosynthesis via salvage pathway; IMP from hypoxanthine: step 1/1. It participates in purine metabolism; GMP biosynthesis via salvage pathway; GMP from guanine: step 1/1. Functionally, purine salvage pathway enzyme that catalyzes the transfer of the ribosyl-5-phosphate group from 5-phospho-alpha-D-ribose 1-diphosphate (PRPP) to the N9 position of the 6-oxopurines hypoxanthine and guanine to form the corresponding ribonucleotides IMP (inosine 5'-monophosphate) and GMP (guanosine 5'-monophosphate), with the release of PPi. This is Hypoxanthine-guanine phosphoribosyltransferase (hpt) from Streptococcus agalactiae serotype III (strain NEM316).